A 195-amino-acid chain; its full sequence is MLQPTLTSWVILAGGQASRMGGKDKGLIALNNKPLIEYVIDRLTPQTSNILINANRNQDDYQQYGPVFGDHFQNFPGPMGGIHAGLLHASTDWVGFVPCDCPRINEDLVERFCRAVTDETDILVAHDGDHQQPVFTLYHKRVLPKLTAFLERGDRKIILLYKECHTQYVDFSDSPDCFVNLNTPEELTQFGQLES.

Residues 12-14 (LAG), Lys-25, Asn-53, Asp-70, and Asp-100 contribute to the GTP site. Asp-100 is a Mg(2+) binding site.

Belongs to the MobA family. In terms of assembly, monomer. It depends on Mg(2+) as a cofactor.

It is found in the cytoplasm. The catalysed reaction is Mo-molybdopterin + GTP + H(+) = Mo-molybdopterin guanine dinucleotide + diphosphate. Functionally, transfers a GMP moiety from GTP to Mo-molybdopterin (Mo-MPT) cofactor (Moco or molybdenum cofactor) to form Mo-molybdopterin guanine dinucleotide (Mo-MGD) cofactor. The polypeptide is Molybdenum cofactor guanylyltransferase (Vibrio vulnificus (strain YJ016)).